The following is a 292-amino-acid chain: RNA 5'-monophosphate methyltransferase (292 aa).

A disordered region spans residues Met-1–Arg-22. Residues Arg-46, Asn-76, Asp-110, Asp-135–Phe-136, and Met-164 each bind S-adenosyl-L-methionine. The Bin3-type SAM domain maps to Glu-53–Pro-274.

Belongs to the methyltransferase superfamily. As to quaternary structure, interacts with DICER1; the interaction may be mediated by RNA.

The protein resides in the cytoplasm. The catalysed reaction is a 5'-end 5'-phospho-ribonucleoside-RNA + S-adenosyl-L-methionine = a 5'-end (5'-methylphospho)-ribonucleoside-RNA + S-adenosyl-L-homocysteine. It carries out the reaction a 5'-end 5'-phospho-ribonucleoside-RNA + 2 S-adenosyl-L-methionine = a 5'-end (5'-bismethylphospho)-ribonucleoside-RNA + 2 S-adenosyl-L-homocysteine. Functionally, O-methyltransferase that specifically monomethylates 5'-monophosphate of cytoplasmic histidyl tRNA (tRNA(His)), acting as a capping enzyme by protecting tRNA(His) from cleavage by DICER1. Also able, with less efficiently, to methylate the 5' monophosphate of a subset of pre-miRNAs, acting as a negative regulator of miRNA processing. The 5' monophosphate of pre-miRNAs is recognized by DICER1 and is required for pre-miRNAs processing: methylation at this position reduces the processing of pre-miRNAs by DICER1. Was also reported to mediate dimethylation of pre-miR-145; however dimethylation cannot be reproduced by another group which observes a monomethylation of pre-miR-145. The sequence is that of RNA 5'-monophosphate methyltransferase (BCDIN3D) from Bos taurus (Bovine).